The chain runs to 1258 residues: Splicing factor, arginine/serine-rich 19 (1258 aa).

6 disordered regions span residues Met-1–Ser-32, Lys-159–Arg-345, Gly-370–Pro-398, Pro-410–Met-1034, Gly-1114–Leu-1154, and Phe-1223–Leu-1258. Positions Ser-7–Pro-27 are enriched in basic and acidic residues. The span at Ser-193–Ser-207 shows a compositional bias: low complexity. A compositionally biased stretch (pro residues) spans Pro-208–Pro-223. The span at Asp-228–Asp-237 shows a compositional bias: basic and acidic residues. Ser-241 bears the Phosphoserine mark. Over residues Thr-256 to Thr-266 the composition is skewed to polar residues. The segment covering Pro-269 to Gly-283 has biased composition (acidic residues). Thr-329 is subject to Phosphothreonine. Residues Leu-374 to Asp-383 show a composition bias toward pro residues. The segment covering Pro-384–Glu-395 has biased composition (acidic residues). Positions Pro-414–Pro-426 are enriched in low complexity. Ser-444 and Ser-449 each carry phosphoserine. Basic residues predominate over residues Lys-480–Gln-491. Residues Ser-493, Ser-495, Ser-512, and Ser-520 each carry the phosphoserine modification. Composition is skewed to basic residues over residues Thr-540 to Ser-555 and Arg-562 to Ser-579. Ser-579 and Ser-581 each carry phosphoserine. Residues Arg-594 to Arg-613 show a composition bias toward basic residues. A compositionally biased stretch (basic and acidic residues) spans Ser-614–Lys-625. At Thr-665 the chain carries Phosphothreonine. Phosphoserine occurs at positions 678 and 684. Residue Tyr-691 is modified to Phosphotyrosine. Residues Ser-693 and Ser-697 each carry the phosphoserine modification. Basic and acidic residues-rich tracts occupy residues Ala-698–Arg-711 and Ser-721–Ser-743. Low complexity-rich tracts occupy residues Ser-752 to Ser-777 and Ser-795 to Ser-806. Lys-814 is covalently cross-linked (Glycyl lysine isopeptide (Lys-Gly) (interchain with G-Cter in SUMO2)). Residues Phe-815–Pro-833 show a composition bias toward basic and acidic residues. Ser-821 and Ser-823 each carry phosphoserine. A compositionally biased stretch (basic residues) spans Lys-845–Arg-877. Ser-878, Ser-885, Ser-912, and Ser-914 each carry phosphoserine. Residues Ser-924–Leu-937 show a composition bias toward pro residues. Thr-925 and Thr-938 each carry phosphothreonine. Over residues Asp-940–Lys-949 the composition is skewed to polar residues. Ser-941 is subject to Phosphoserine. Thr-950 is subject to Phosphothreonine. A compositionally biased stretch (acidic residues) spans Glu-971–Gln-986. Residues Gln-987–Gly-1019 show a composition bias toward low complexity. A necessary for interaction with the CTD domain of POLR2A region spans residues Pro-1133–Leu-1258. Over residues Ser-1135–Leu-1154 the composition is skewed to basic and acidic residues. The span at Pro-1246–Leu-1258 shows a compositional bias: pro residues.

This sequence belongs to the splicing factor SR family. In terms of assembly, interacts with POLR2A.

The protein resides in the nucleus. Functionally, may function in pre-mRNA splicing. The polypeptide is Splicing factor, arginine/serine-rich 19 (Scaf1) (Rattus norvegicus (Rat)).